The primary structure comprises 397 residues: Succinyl-diaminopimelate desuccinylase (397 aa).

H73 contacts Zn(2+). D75 is a catalytic residue. D106 contributes to the Zn(2+) binding site. E140 functions as the Proton acceptor in the catalytic mechanism. Positions 141, 169, and 366 each coordinate Zn(2+).

This sequence belongs to the peptidase M20A family. DapE subfamily. In terms of assembly, homodimer. Zn(2+) is required as a cofactor. The cofactor is Co(2+).

The enzyme catalyses N-succinyl-(2S,6S)-2,6-diaminopimelate + H2O = (2S,6S)-2,6-diaminopimelate + succinate. It participates in amino-acid biosynthesis; L-lysine biosynthesis via DAP pathway; LL-2,6-diaminopimelate from (S)-tetrahydrodipicolinate (succinylase route): step 3/3. Its function is as follows. Catalyzes the hydrolysis of N-succinyl-L,L-diaminopimelic acid (SDAP), forming succinate and LL-2,6-diaminopimelate (DAP), an intermediate involved in the bacterial biosynthesis of lysine and meso-diaminopimelic acid, an essential component of bacterial cell walls. This is Succinyl-diaminopimelate desuccinylase from Rhizobium rhizogenes (strain K84 / ATCC BAA-868) (Agrobacterium radiobacter).